The primary structure comprises 60 residues: Metallothionein (60 aa).

The segment at 1–28 (MDPCECSKTGKCSCGGSCTCTNCSCTSC) is beta. The a divalent metal cation site is built by Cys-4, Cys-6, Cys-12, Cys-14, Cys-18, Cys-20, Cys-23, Cys-25, Cys-28, Cys-32, Cys-33, Cys-35, Cys-36, Cys-40, Cys-43, Cys-47, Cys-49, Cys-54, Cys-58, and Cys-59. Residues 29–60 (KKSCCPCCPSGCSKCASGCVCKGKTCDTSCCQ) form an alpha region.

It belongs to the metallothionein superfamily. Type 1 family.

In terms of biological role, metallothioneins have a high content of cysteine residues that bind various heavy metals. In Chelon auratus (Golden grey mullet), this protein is Metallothionein (mt).